The primary structure comprises 455 residues: Homogentisate 1,2-dioxygenase (455 aa).

Catalysis depends on H308, which acts as the Proton acceptor. Residues H351 and E357 each coordinate Fe cation. Positions 366 and 387 each coordinate homogentisate. Fe cation is bound at residue H387.

This sequence belongs to the homogentisate dioxygenase family. In terms of assembly, hexamer; dimer of trimers. The cofactor is Fe cation.

The catalysed reaction is homogentisate + O2 = 4-maleylacetoacetate + H(+). Its pathway is amino-acid degradation; L-phenylalanine degradation; acetoacetate and fumarate from L-phenylalanine: step 4/6. In terms of biological role, involved in the catabolism of homogentisate (2,5-dihydroxyphenylacetate or 2,5-OH-PhAc), a central intermediate in the degradation of phenylalanine and tyrosine. Catalyzes the oxidative ring cleavage of the aromatic ring of homogentisate to yield maleylacetoacetate. This chain is Homogentisate 1,2-dioxygenase, found in Xanthomonas campestris pv. campestris (strain 8004).